A 509-amino-acid polypeptide reads, in one-letter code: MWVLLVFFLLTLTYLFWPKTKGSGAKYPRSLPVLPVVGSLPFLPRRGHQHMNFFKLQDKYGPIFSFRLGSKTTVVIGDHQLAKEVLLKKGKEFSGRPRVMTLDILSDNQKGIAFADHGTSWQLHRKLALSTFSLFKGGNLKLENIINQEIKVLCDFLATRNGESIDLAQPLSLAMTNIVSFICFNFSFKKGDPALQAIVNFNDGILDAVGKEILYDMFPGIRILPSQTLENMKQCVRMRNELLREILENRKENYSRNSITNLLDIMIQAKTNAESNTGGPDHNLKLLSDRHMLATVADIFGAGVETSASVVKWIVAFLLHYPLLRKKIQDAIDQNIGFNRAPSISDRNQLVLLEATIREVLRFRPVSPTLIPHRAIIDSSIGEFTIDKDTDVVVNLWALHHNEKEWHRPDLFMPERFLDPTGTQLISPSLSYLPFGAGPRSCVGEMLARQELFLFTAGLLQRFDLELPDDGQLPCLVGNPSLVLQIDPFKVKIKERQAWKEAHTEGSTS.

Residue N202 participates in substrate binding. Residue C442 coordinates heme.

The protein belongs to the cytochrome P450 family. It depends on heme as a cofactor.

Its subcellular location is the endoplasmic reticulum membrane. It is found in the microsome membrane. It carries out the reaction a C21-steroid + reduced [NADPH--hemoprotein reductase] + O2 = a 17alpha-hydroxy-C21-steroid + oxidized [NADPH--hemoprotein reductase] + H2O + H(+). It catalyses the reaction progesterone + reduced [NADPH--hemoprotein reductase] + O2 = 17alpha-hydroxyprogesterone + oxidized [NADPH--hemoprotein reductase] + H2O + H(+). The catalysed reaction is pregnenolone + reduced [NADPH--hemoprotein reductase] + O2 = 17alpha-hydroxypregnenolone + oxidized [NADPH--hemoprotein reductase] + H2O + H(+). The enzyme catalyses 17alpha-hydroxyprogesterone + reduced [NADPH--hemoprotein reductase] + O2 = androst-4-ene-3,17-dione + acetate + oxidized [NADPH--hemoprotein reductase] + H2O + 2 H(+). It carries out the reaction 17alpha-hydroxyprogesterone + reduced [NADPH--hemoprotein reductase] + O2 = 16alpha,17alpha-dihydroxyprogesterone + oxidized [NADPH--hemoprotein reductase] + H2O + H(+). It catalyses the reaction 16alpha,17alpha-dihydroxyprogesterone + reduced [NADPH--hemoprotein reductase] + O2 = 6beta,16alpha,17alpha-trihydroxyprogesterone + oxidized [NADPH--hemoprotein reductase] + H2O + H(+). The catalysed reaction is 17alpha-hydroxypregnenolone + reduced [NADPH--hemoprotein reductase] + O2 = 3beta-hydroxyandrost-5-en-17-one + acetate + oxidized [NADPH--hemoprotein reductase] + H2O + 2 H(+). The enzyme catalyses 16alpha,17alpha-dihydroxypregnenolone + reduced [NADPH--hemoprotein reductase] + O2 = 3beta,16alpha-dihydroxy-androst-5-en-17-one + acetate + oxidized [NADPH--hemoprotein reductase] + H2O + 2 H(+). It carries out the reaction 3beta-hydroxyandrost-5-en-17-one + reduced [NADPH--hemoprotein reductase] + O2 = 3beta,16alpha-dihydroxy-androst-5-en-17-one + oxidized [NADPH--hemoprotein reductase] + H2O + H(+). It catalyses the reaction androst-4-ene-3,17-dione + reduced [NADPH--hemoprotein reductase] + O2 = 16alpha-hydroxyandrost-4-ene-3,17-dione + oxidized [NADPH--hemoprotein reductase] + H2O + H(+). Its pathway is steroid hormone biosynthesis. It functions in the pathway steroid biosynthesis; glucocorticoid biosynthesis. Regulated predominantly by intracellular cAMP levels. The 17,20-lyase activity is stimulated by cytochrome b5, which acts as an allosteric effector increasing the Vmax of the lyase activity. A cytochrome P450 monooxygenase involved in corticoid and androgen biosynthesis. Catalyzes 17-alpha hydroxylation of C21 steroids, which is common for both pathways. A second oxidative step, required only for androgen synthesis, involves an acyl-carbon cleavage. The 17-alpha hydroxy intermediates, as part of adrenal glucocorticoids biosynthesis pathway, are precursors of cortisol. Hydroxylates steroid hormones, pregnenolone and progesterone to form 17-alpha hydroxy metabolites, followed by the cleavage of the C17-C20 bond to form C19 steroids, dehydroepiandrosterone (DHEA) and androstenedione. Has 16-alpha hydroxylase activity. Catalyzes 16-alpha hydroxylation of 17-alpha hydroxy pregnenolone, followed by the cleavage of the C17-C20 bond to form 16-alpha-hydroxy DHEA. Also 16-alpha hydroxylates androgens, relevant for estriol synthesis. Mechanistically, uses molecular oxygen inserting one oxygen atom into a substrate, and reducing the second into a water molecule, with two electrons provided by NADPH via cytochrome P450 reductase (CPR; NADPH-ferrihemoprotein reductase). The chain is Steroid 17-alpha-hydroxylase/17,20 lyase (CYP17A1) from Sus scrofa (Pig).